We begin with the raw amino-acid sequence, 321 residues long: D-alanine--D-alanine ligase (321 aa).

Residues Arg-121 to Lys-315 enclose the ATP-grasp domain. An ATP-binding site is contributed by Pro-147–Gln-199. Glu-268, Glu-282, and Asn-284 together coordinate Mg(2+).

It belongs to the D-alanine--D-alanine ligase family. Mg(2+) is required as a cofactor. The cofactor is Mn(2+).

The protein localises to the cytoplasm. It carries out the reaction 2 D-alanine + ATP = D-alanyl-D-alanine + ADP + phosphate + H(+). Its pathway is cell wall biogenesis; peptidoglycan biosynthesis. Functionally, cell wall formation. The chain is D-alanine--D-alanine ligase from Rickettsia massiliae (strain Mtu5).